Consider the following 250-residue polypeptide: Exosome complex component Rrp41 (250 aa).

The protein belongs to the RNase PH family. Rrp41 subfamily. As to quaternary structure, component of the archaeal exosome complex. Forms a hexameric ring-like arrangement composed of 3 Rrp41-Rrp42 heterodimers. The hexameric ring associates with a trimer of Rrp4 and/or Csl4 subunits.

Its subcellular location is the cytoplasm. Catalytic component of the exosome, which is a complex involved in RNA degradation. Has 3'-&gt;5' exoribonuclease activity. Can also synthesize heteromeric RNA-tails. The sequence is that of Exosome complex component Rrp41 from Pyrococcus furiosus (strain ATCC 43587 / DSM 3638 / JCM 8422 / Vc1).